Consider the following 479-residue polypeptide: 6-phosphogluconate dehydrogenase, decarboxylating (479 aa).

NADP(+) contacts are provided by residues 9–14, 32–34, 77–79, and N105; these read GLGVMG, NRT, and VQA. Substrate contacts are provided by residues N105 and 131–133; that span reads SGG. The Proton acceptor role is filled by K186. 189–190 is a binding site for substrate; sequence HN. The active-site Proton donor is the E193. Residues Y194, K263, R290, R454, and H460 each coordinate substrate.

The protein belongs to the 6-phosphogluconate dehydrogenase family. As to quaternary structure, homodimer.

The catalysed reaction is 6-phospho-D-gluconate + NADP(+) = D-ribulose 5-phosphate + CO2 + NADPH. It functions in the pathway carbohydrate degradation; pentose phosphate pathway; D-ribulose 5-phosphate from D-glucose 6-phosphate (oxidative stage): step 3/3. In terms of biological role, catalyzes the oxidative decarboxylation of 6-phosphogluconate to ribulose 5-phosphate and CO(2), with concomitant reduction of NADP to NADPH. The sequence is that of 6-phosphogluconate dehydrogenase, decarboxylating (GND) from Trypanosoma brucei brucei.